Reading from the N-terminus, the 55-residue chain is Neurotoxin BmKX-A1-S31 (55 aa).

An N-terminal signal peptide occupies residues 1-23; that stretch reads MKIFFAVLVILVLFSMLIWTAYG. 3 disulfide bridges follow: Cys-30–Cys-45, Cys-36–Cys-50, and Cys-39–Cys-53.

As to expression, expressed by the venom gland.

It localises to the secreted. The sequence is that of Neurotoxin BmKX-A1-S31 from Olivierus martensii (Manchurian scorpion).